Consider the following 233-residue polypeptide: Probable chemoreceptor glutamine deamidase CheD (233 aa).

This sequence belongs to the CheD family.

It catalyses the reaction L-glutaminyl-[protein] + H2O = L-glutamyl-[protein] + NH4(+). Probably deamidates glutamine residues to glutamate on methyl-accepting chemotaxis receptors (MCPs), playing an important role in chemotaxis. The protein is Probable chemoreceptor glutamine deamidase CheD of Ralstonia nicotianae (strain ATCC BAA-1114 / GMI1000) (Ralstonia solanacearum).